The following is a 222-amino-acid chain: UPF0502 protein XAC4278 (222 aa).

This sequence belongs to the UPF0502 family.

The sequence is that of UPF0502 protein XAC4278 from Xanthomonas axonopodis pv. citri (strain 306).